The following is a 365-amino-acid chain: Phosphatidylcholine:ceramide cholinephosphotransferase 4 (365 aa).

Over 1 to 44 the chain is Cytoplasmic; the sequence is MISYPFFSLSPPGLVPPPMAVPPVEMYSGSFWNRMRKPLPLRTQ. A helical membrane pass occupies residues 45-65; it reads VIRFTVVFVIVSFILAVALQI. Residues 66 to 92 lie on the Lumenal side of the membrane; it reads THERMPDPKVTKPLPDLGFELLTKVPG. Residues 93-113 form a helical membrane-spanning segment; sequence MYVLADCCIGFLNILSVFTAF. Topologically, residues 114–165 are cytoplasmic; that stretch reads KLYLLHRHCVGSGEPELPCNIPGVSRFFLSVWLCKENCRIELRNIHTIAWIR. The chain crosses the membrane as a helical span at residues 166-186; that stretch reads FITSYALLLLFRSAVIVMTSL. Over 187 to 229 the chain is Lumenal; the sequence is PAPDDLCQDPPKIENPVKNVILTVLTAGGGSIHCGDLMYSGHT. Histidine 228 is an active-site residue. Residues 230-250 traverse the membrane as a helical segment; that stretch reads VILTLHLMFHWIYGAMVHWSF. A topological domain (cytoplasmic) is located at residue arginine 251. A helical membrane pass occupies residues 252 to 272; sequence PVVTVVAIFGYYCIVASRFHY. Active-site residues include histidine 271 and aspartate 275. Residues 273 to 275 lie on the Lumenal side of the membrane; sequence TDD. A helical transmembrane segment spans residues 276–296; that stretch reads VLVAIYLTIATFIAVGHNADG. Over 297 to 365 the chain is Cytoplasmic; the sequence is APWQLQLFIR…SLMFKCGAYV (69 aa).

Belongs to the sphingomyelin synthase family.

Its subcellular location is the golgi apparatus membrane. The enzyme catalyses an N-acylsphing-4-enine + a 1,2-diacyl-sn-glycero-3-phosphocholine = a sphingomyelin + a 1,2-diacyl-sn-glycerol. It catalyses the reaction an N-acylsphinganine + a 1,2-diacyl-sn-glycero-3-phosphocholine = an N-acylsphinganine-1-phosphocholine + a 1,2-diacyl-sn-glycerol. The catalysed reaction is an N-acylsphing-4-enine + a 1,2-diacyl-sn-glycero-3-phosphoethanolamine = an N-acylsphing-4-enine 1-phosphoethanolamine + a 1,2-diacyl-sn-glycerol. It carries out the reaction an N-acylsphinganine + a 1,2-diacyl-sn-glycero-3-phosphoethanolamine = an N-acylsphinganine-1-phosphoethanolamine + a 1,2-diacyl-sn-glycerol. The enzyme catalyses a 1,2-diacyl-sn-glycero-3-phospho-(1D-myo-inositol) + an N-acylsphing-4-enine = an N-acylsphing-4-enine-(1D-myo-inositol) + a 1,2-diacyl-sn-glycerol. It catalyses the reaction an N-acylsphinganine + a 1,2-diacyl-sn-glycero-3-phospho-(1D-myo-inositol) = an N-acylsphinganine-(1D-myo-inositol) + a 1,2-diacyl-sn-glycerol. Functionally, bifunctional sphingomyelin (SM)/ethanolamine phosphorylceramide (EPC) synthase with minimal inositol phosphorylceramide (IPC) synthase activity. Specificity is likely to be defined by residues in the lumenal catalytic domain that interact with the polar head groups of the phospholipid donors. SM is synthesized by both stages of the parasite life cycle, bloodstream forms (BSF) and procyclic forms (PCF), by transferring the phosphoryl headgroup from a 1,2-diacyl-sn-glycero-3-phosphocholine to an N-acylsphing-4-enine (ceramide) or an N-acylsphinganine (dihydroceramide) with release of 1,2-diacyl-sn-glycerol. Also catalyzes the reverse reaction, production of ceramide from sphingomyelin. EPC is synthesized by transferring phosphoethanolamine from a 1,2-diacyl-sn-glycero-3-phosphoethanolamine to ceramide or dihydroceramide by BSF and PCF, while IPC is confined to PCF. The ceramide/dihydroceramide ratios are skewed towards dihydroceramide in PCF parasites and ceramide in BSF parasites, this is likely due to differential expression and/or regulation of dihydroceramide desaturase, the enzyme responsible for converting dihydroceramide to ceramide. This chain is Phosphatidylcholine:ceramide cholinephosphotransferase 4, found in Trypanosoma brucei brucei.